Here is a 623-residue protein sequence, read N- to C-terminus: Sterol O-acyltransferase 1 (623 aa).

A disordered region spans residues asparagine 20 to aspartate 99. Over residues alanine 57–alanine 72 the composition is skewed to low complexity. A compositionally biased stretch (acidic residues) spans aspartate 83 to alanine 92. 5 helical membrane-spanning segments follow: residues leucine 195–phenylalanine 215, leucine 242–valine 262, glycine 277–valine 297, isoleucine 384–tyrosine 404, and isoleucine 422–methionine 442. The short motif at phenylalanine 504 to asparagine 510 is the FYXDWWN motif element. The next 2 membrane-spanning stretches (helical) occupy residues alanine 548–phenylalanine 568 and valine 603–leucine 623. Histidine 560 is an active-site residue.

The protein belongs to the membrane-bound acyltransferase family. Sterol o-acyltransferase subfamily.

It is found in the endoplasmic reticulum membrane. Functionally, sterol O-acyltransferase that catalyzes the formation of stery esters. In Saccharomyces uvarum (strain ATCC 76518 / CBS 7001 / CLIB 283 / NBRC 10550 / MCYC 623 / NCYC 2669 / NRRL Y-11845) (Yeast), this protein is Sterol O-acyltransferase 1 (ARE1).